Here is a 504-residue protein sequence, read N- to C-terminus: FAD-dependent monooxygenase nsrK (504 aa).

Position 146 (arginine 146) interacts with FAD. The active site involves arginine 227. The FAD site is built by aspartate 340 and glycine 353.

It belongs to the paxM FAD-dependent monooxygenase family. FAD is required as a cofactor.

The protein operates within secondary metabolite biosynthesis. In terms of biological role, FAD-dependent monooxygenase; part of the gene cluster that mediates the biosynthesis of the tetrahydroxanthone dimer neosartorin, which exhibits antibacterial activity. The two different monomeric units appear to be synthesized by the same set of enzymes, among which the Baeyer-Villiger monooxygenase nsrF is the key enzyme for the divergence of the biosynthetic routes. The pathway begins with the synthesis of atrochrysone thioester by the polyketide synthase nsrB. The atrochrysone carboxyl ACP thioesterase nsrC then breaks the thioester bond and releases the atrochrysone carboxylic acid from AacuL. Atrochrysone carboxylic acid is decarboxylated by the decarboxylase nsrE, and oxidized by the anthrone oxygenase nsrD to yield emodin. Emodin is then reduced to emodin hydroquinone by the oxidoreductase nsrR. A-ring reduction by the short chain dehydrogenase nsrJ, dehydration by the scytalone dehydratase-like protein nsrI and probable spontaneous re-oxidation, results in overall deoxygenation to chrysophanol. The Baeyer-Villiger monooxygenase nsrF accepts chrysophanol as a substrate to insert one oxygen atom at two different positions to yield the precursors of both monomric units. NsrF is promiscuous/flexible in interacting with the 2 (non methylated and methylated) aromatic rings of chrysophanol, thus diverging the biosynthetic pathway at this point. After the hydrolysis of the lactones, methylesterification by the methyltransferase nsrG yields respectively moniliphenone and 2,2',6'-trihydroxy-4-methyl-6-methoxya-cyldiphenylmethanone. The next steps are the hydroxylation by the FAD-dependent monooxygenase nsrK, followed by isomerization by the monooxygenase nsrQ. The short chain dehydrogenase/reductase nsrO then catalyzes the C-5 ketoreduction to give the xanthone skeleton of blennolide C and 5-acetylblennolide A. The acetyltransferase nsrL has a strict substrate specificity and uses only blennolide A but not blennolide C to yield 5-acetylblennolide A as the single-acetylated product. In the final step of the biosynthesis, the heterodimerization of the 2 xanthones, blennolide C and 5-acetylblennolide A, is catalyzed by the cytochrome P450 monooxygenase nsrP. NsrP can utilize at least three different xanthones as its substrates to perform the dimerization reaction. The chain is FAD-dependent monooxygenase nsrK from Aspergillus novofumigatus (strain IBT 16806).